Here is a 463-residue protein sequence, read N- to C-terminus: Asparagine--tRNA ligase (463 aa).

This sequence belongs to the class-II aminoacyl-tRNA synthetase family. Homodimer.

Its subcellular location is the cytoplasm. It catalyses the reaction tRNA(Asn) + L-asparagine + ATP = L-asparaginyl-tRNA(Asn) + AMP + diphosphate + H(+). The chain is Asparagine--tRNA ligase from Alkaliphilus oremlandii (strain OhILAs) (Clostridium oremlandii (strain OhILAs)).